The chain runs to 219 residues: Response regulator ArlR (219 aa).

A Response regulatory domain is found at 3-116; the sequence is NILIVEDEQN…ELFARIRAVL (114 aa). Asp52 is subject to 4-aspartylphosphate. A DNA-binding region (ompR/PhoB-type) is located at residues 122–219; it reads KDIIDINGIK…TVRGVGYVIR (98 aa).

Phosphorylated by ArlS.

The protein localises to the cytoplasm. Its function is as follows. Member of the two-component regulatory system ArlS/ArlR. The protein is Response regulator ArlR (arlR) of Staphylococcus haemolyticus (strain JCSC1435).